Consider the following 178-residue polypeptide: MLEGVIRESITKANAKALKKDGYLIANVYGKGIENVNGAFKLNPFIKYLKEKKHLIFPVKLGDKTFEVVVQEYQKNPVTNELIHVDLLAVTKGVKSKFKVPIKHQGTPVGLKNKGILMLSKKRISVECAPEHLPDHYLVDVAPLDVNESILVRDLEKHENVKILDHDSIAVIGVIKAK.

The protein belongs to the bacterial ribosomal protein bL25 family. CTC subfamily. Part of the 50S ribosomal subunit; part of the 5S rRNA/L5/L18/L25 subcomplex. Contacts the 5S rRNA. Binds to the 5S rRNA independently of L5 and L18.

Its function is as follows. This is one of the proteins that binds to the 5S RNA in the ribosome where it forms part of the central protuberance. This chain is Large ribosomal subunit protein bL25, found in Helicobacter pylori (strain ATCC 700392 / 26695) (Campylobacter pylori).